A 363-amino-acid polypeptide reads, in one-letter code: MRVSDFNFDLPDELIARYPKTDRVSCRLLQLNGENGEIFHRTFSDVLDLIDEGDLLIFNNTRVIPARMFGRKASGGKIEVLVERMLDEHRFLAHIRSSKSPKEGAELFLGEDKLGENNGIKAVMKARHSSLFEVELSDKSTALLDVLQTIGHMPLPPYIDRPDEEADKECYQTVYSKVPGAVAAPTAGLHFDENLLEKLKAKGVNFEFVTLHVGAGTFQPVRVENIEDHVMHAEYVEVSQEVCNAIIATKKAGKRVIAVGTTSVRSIESAALSAEEFGNPDLIEPYFSDTSIFIYPGKKFRVVDCLITNFHLPESTLIMLVSAFAGYKNTMNAYKQAVQEKYRFFSYGDAMFINKNSNVRELE.

Belongs to the QueA family. Monomer.

It localises to the cytoplasm. The catalysed reaction is 7-aminomethyl-7-carbaguanosine(34) in tRNA + S-adenosyl-L-methionine = epoxyqueuosine(34) in tRNA + adenine + L-methionine + 2 H(+). It participates in tRNA modification; tRNA-queuosine biosynthesis. In terms of biological role, transfers and isomerizes the ribose moiety from AdoMet to the 7-aminomethyl group of 7-deazaguanine (preQ1-tRNA) to give epoxyqueuosine (oQ-tRNA). The protein is S-adenosylmethionine:tRNA ribosyltransferase-isomerase of Haemophilus influenzae (strain PittEE).